We begin with the raw amino-acid sequence, 451 residues long: DNA polymerase IV (451 aa).

Residues 5–187 enclose the UmuC domain; it reads VIHVDMDAFF…LPVGRLWGVG (183 aa). Mg(2+)-binding residues include Asp9 and Asp104. The active site involves Glu105.

Belongs to the DNA polymerase type-Y family. In terms of assembly, monomer. Mg(2+) is required as a cofactor.

The protein resides in the cytoplasm. It carries out the reaction DNA(n) + a 2'-deoxyribonucleoside 5'-triphosphate = DNA(n+1) + diphosphate. Functionally, poorly processive, error-prone DNA polymerase involved in untargeted mutagenesis. Copies undamaged DNA at stalled replication forks, which arise in vivo from mismatched or misaligned primer ends. These misaligned primers can be extended by PolIV. Exhibits no 3'-5' exonuclease (proofreading) activity. May be involved in translesional synthesis, in conjunction with the beta clamp from PolIII. This Corynebacterium diphtheriae (strain ATCC 700971 / NCTC 13129 / Biotype gravis) protein is DNA polymerase IV.